The sequence spans 636 residues: Chaperone protein HtpG (636 aa).

The tract at residues 1 to 344 is a; substrate-binding; sequence MTMSVETQKE…SNDLSLNVSR (344 aa). The segment at 345-561 is b; that stretch reads EILQKDPIID…EQDLGMQMRQ (217 aa). The tract at residues 562-636 is c; it reads ILEASGQKVP…LNKLLVELSV (75 aa).

This sequence belongs to the heat shock protein 90 family. As to quaternary structure, homodimer.

Its subcellular location is the cytoplasm. In terms of biological role, molecular chaperone. Has ATPase activity. The chain is Chaperone protein HtpG from Pseudomonas fluorescens (strain SBW25).